The primary structure comprises 131 residues: MSIHISIIAPDRTVWDANAEEVILPSSTGQLGILKGHAPLLTALDIGVMRVRVDRDWTPIVLLGGFAEIENDELTILVNGAEEASQIDRDQAQRDLEEMTVKFNEATTNKERIEATQNLRKARARLQAVSA.

It belongs to the ATPase epsilon chain family. F-type ATPases have 2 components, CF(1) - the catalytic core - and CF(0) - the membrane proton channel. CF(1) has five subunits: alpha(3), beta(3), gamma(1), delta(1), epsilon(1). CF(0) has three main subunits: a, b and c.

The protein resides in the plastid. The protein localises to the chloroplast thylakoid membrane. In terms of biological role, produces ATP from ADP in the presence of a proton gradient across the membrane. The polypeptide is ATP synthase epsilon chain, chloroplastic (Guillardia theta (Cryptophyte)).